A 311-amino-acid chain; its full sequence is tRNA-cytidine(32) 2-sulfurtransferase (311 aa).

A PP-loop motif motif is present at residues 47-52 (SGGKDS). The [4Fe-4S] cluster site is built by cysteine 122, cysteine 125, and cysteine 213.

The protein belongs to the TtcA family. As to quaternary structure, homodimer. Mg(2+) serves as cofactor. Requires [4Fe-4S] cluster as cofactor.

It is found in the cytoplasm. The enzyme catalyses cytidine(32) in tRNA + S-sulfanyl-L-cysteinyl-[cysteine desulfurase] + AH2 + ATP = 2-thiocytidine(32) in tRNA + L-cysteinyl-[cysteine desulfurase] + A + AMP + diphosphate + H(+). It functions in the pathway tRNA modification. Its function is as follows. Catalyzes the ATP-dependent 2-thiolation of cytidine in position 32 of tRNA, to form 2-thiocytidine (s(2)C32). The sulfur atoms are provided by the cysteine/cysteine desulfurase (IscS) system. This Escherichia coli (strain SMS-3-5 / SECEC) protein is tRNA-cytidine(32) 2-sulfurtransferase.